The sequence spans 788 residues: Calpastatin (788 aa).

Pro residues predominate over residues 1-11 (MSQPGPKPAAS). Disordered regions lie at residues 1–262 (MSQP…TGPV), 289–493 (LLEK…MCSI), and 514–580 (TLAG…SQEQ). Serine 11 carries the phosphoserine modification. Positions 12–21 (PRPSRGAAAR) are enriched in low complexity. The segment covering 38 to 49 (PGEKKGSDEKKA) has biased composition (basic and acidic residues). The span at 65-87 (AATATKVTASSAATSKSPSMSTT) shows a compositional bias: low complexity. The segment covering 99 to 119 (EGPDQKRPREQAVKTESKKPQ) has biased composition (basic and acidic residues). A Glycyl lysine isopeptide (Lys-Gly) (interchain with G-Cter in SUMO2) cross-link involves residue lysine 112. The residue at position 129 (lysine 129) is an N6-acetyllysine. A Phosphoserine modification is found at serine 165. The residue at position 216 (threonine 216) is a Phosphothreonine. Residue serine 219 is modified to Phosphoserine. The segment covering 246-256 (GGHEDTNRDDP) has biased composition (basic and acidic residues). Residues 251–303 (TNRDDPPYTGPVVLDPMYSTYLEALGIKEGTIPPEYRKLLEKNEGITQPLPDS) form an Inhibitory domain 1 repeat. Phosphoserine is present on residues serine 303 and serine 324. Composition is skewed to polar residues over residues 318–328 (SDFTCSSPTGK) and 369–380 (QALQALSDSLGT). Residues 384 to 436 (DPPSHVSQAEQVKEAKAKEERQEKCGEDEDTVPAEYRLKPAKDKDGKPLLPEP) form an Inhibitory domain 2 repeat. Composition is skewed to basic and acidic residues over residues 394 to 408 (QVKEAKAKEERQEKC) and 419 to 430 (YRLKPAKDKDGK). The span at 441–453 (KSLSESELIGELS) shows a compositional bias: low complexity. Phosphoserine occurs at positions 444, 446, and 453. Threonine 479 is subject to Phosphothreonine. Serine 518 bears the Phosphoserine mark. Over residues 522–570 (READPEHEKTVEDKVKEKAKEEEHEKLGEKEETVPPDYRLEEVKDKDGK) the composition is skewed to basic and acidic residues. Residues 524 to 577 (ADPEHEKTVEDKVKEKAKEEEHEKLGEKEETVPPDYRLEEVKDKDGKPLLPKES) form an Inhibitory domain 3 repeat. 4 positions are modified to phosphoserine: serine 594, serine 605, serine 653, and serine 655. The segment at 620 to 788 (VVSQTPAPST…PKAKEDARHS (169 aa)) is disordered. The stretch at 661-714 (PDPDENKPLDDKVKEKIKPEHSEKLGERDDTIPPEYRHLLDNDGKDKPEKPPTK) is one Inhibitory domain 4 repeat. Composition is skewed to basic and acidic residues over residues 661–726 (PDPD…RDPI) and 759–788 (ASKDGEKTKDSSKKTEEVSKPKAKEDARHS).

Belongs to the protease inhibitor I27 (calpastatin) family. In terms of tissue distribution, isoform 2 is the major form in all tissues examined. Isoform 1 accounts for 5-10% in tissues such as skeletal muscle, liver and brain, and 30% in myoblasts. Isoforms 4 and 5 are testis-specific. Isoform 6 is highly expressed in heart and skeletal muscle with lower levels in liver, brain and testis. Isoform 7 is expressed at high levels in liver.

Its function is as follows. Specific inhibition of calpain (calcium-dependent cysteine protease). Plays a key role in postmortem tenderization of meat and have been proposed to be involved in muscle protein degradation in living tissue. In Mus musculus (Mouse), this protein is Calpastatin (Cast).